Consider the following 85-residue polypeptide: Large ribosomal subunit protein bL27 (85 aa).

A disordered region spans residues 1 to 20 (MATKKAGGSTRNGRDSEAKR).

The protein belongs to the bacterial ribosomal protein bL27 family.

In Haemophilus influenzae (strain PittEE), this protein is Large ribosomal subunit protein bL27.